Consider the following 481-residue polypeptide: UDP-glycosyltransferase 73B3 (481 aa).

His21 functions as the Proton acceptor in the catalytic mechanism. An an anthocyanidin-binding site is contributed by His21. Asp132 functions as the Charge relay in the catalytic mechanism. UDP-alpha-D-glucose-binding residues include Ala355, Gln357, His372, Trp375, Asn376, Ser377, and Glu380. Ala395 is a binding site for an anthocyanidin. 2 residues coordinate UDP-alpha-D-glucose: Glu396 and Gln397.

Belongs to the UDP-glycosyltransferase family. As to expression, expressed in roots and flowers.

It carries out the reaction a flavonol + UDP-alpha-D-glucose = a flavonol 3-O-beta-D-glucoside + UDP + H(+). Possesses quercetin 3-O-glucosyltransferase activity in vitro. Also active in vitro on benzoates and benzoate derivatives. Involved in stress or defense responses. The chain is UDP-glycosyltransferase 73B3 (UGT73B3) from Arabidopsis thaliana (Mouse-ear cress).